The following is a 92-amino-acid chain: SPbeta prophage-derived uncharacterized protein YopY (92 aa).

The chain is SPbeta prophage-derived uncharacterized protein YopY (yopY) from Bacillus subtilis (strain 168).